Here is a 737-residue protein sequence, read N- to C-terminus: Cellulose synthase-like protein E1 (737 aa).

The next 2 helical transmembrane spans lie at 26 to 45 (AVYR…VLYY) and 58 to 78 (AAWL…VIAQ). Catalysis depends on residues aspartate 146 and aspartate 451. 5 consecutive transmembrane segments (helical) span residues 528–548 (LWAA…LGLV), 551–571 (TPLF…VFCV), 654–674 (VIIA…LSQI), 683–703 (WNVF…NMPI), and 716–736 (IPTA…LVPI).

This sequence belongs to the glycosyltransferase 2 family. Plant cellulose synthase-like E subfamily.

It localises to the golgi apparatus membrane. Functionally, thought to be a Golgi-localized beta-glycan synthase that polymerize the backbones of noncellulosic polysaccharides (hemicelluloses) of plant cell wall. This chain is Cellulose synthase-like protein E1 (CSLE1), found in Oryza sativa subsp. japonica (Rice).